Here is a 344-residue protein sequence, read N- to C-terminus: Dihydroorotase (344 aa).

2 residues coordinate Zn(2+): histidine 14 and histidine 16. Substrate-binding positions include 16-18 (HLR) and asparagine 42. Residues lysine 100, histidine 137, and histidine 175 each contribute to the Zn(2+) site. Lysine 100 bears the N6-carboxylysine mark. Substrate is bound at residue histidine 137. Residue leucine 220 coordinates substrate. Aspartate 248 serves as a coordination point for Zn(2+). Residue aspartate 248 is part of the active site. The substrate site is built by histidine 252 and alanine 264.

It belongs to the metallo-dependent hydrolases superfamily. DHOase family. Class II DHOase subfamily. As to quaternary structure, homodimer. The cofactor is Zn(2+).

The enzyme catalyses (S)-dihydroorotate + H2O = N-carbamoyl-L-aspartate + H(+). The protein operates within pyrimidine metabolism; UMP biosynthesis via de novo pathway; (S)-dihydroorotate from bicarbonate: step 3/3. Catalyzes the reversible cyclization of carbamoyl aspartate to dihydroorotate. The protein is Dihydroorotase of Roseobacter denitrificans (strain ATCC 33942 / OCh 114) (Erythrobacter sp. (strain OCh 114)).